We begin with the raw amino-acid sequence, 22 residues long: Large ribosomal subunit protein bL32 (22 aa).

The interval 1–22 (CVQQNKKSRSARDMXXSXDALE) is disordered. Positions 13 to 22 (DMXXSXDALE) are enriched in low complexity.

It belongs to the bacterial ribosomal protein bL32 family.

The chain is Large ribosomal subunit protein bL32 (rpmF) from Ectopseudomonas mendocina (Pseudomonas mendocina).